Consider the following 132-residue polypeptide: MKGLGSTIVRSLPNGARLVCADNTGAKELEIIAVKNYTGTVRRLPAGGVGHMVFVSVKKGTPEMRKQVLPAIIIRQKKEYKRADGTRVKFEDNAAVIVTPEGTPKGSEIKGPVSKEAAERWPGVSRLAKIIH.

The protein belongs to the universal ribosomal protein uL14 family. Part of the 50S ribosomal subunit. Forms a cluster with proteins L3 and L24e, part of which may contact the 16S rRNA in 2 intersubunit bridges.

Binds to 23S rRNA. Forms part of two intersubunit bridges in the 70S ribosome. This is Large ribosomal subunit protein uL14 from Methanococcus maripaludis (strain C7 / ATCC BAA-1331).